A 264-amino-acid chain; its full sequence is 3-methyl-2-oxobutanoate hydroxymethyltransferase (264 aa).

Residues aspartate 45 and aspartate 84 each contribute to the Mg(2+) site. Residues aspartate 45–serine 46, aspartate 84, and lysine 112 each bind 3-methyl-2-oxobutanoate. Glutamate 114 lines the Mg(2+) pocket. Catalysis depends on glutamate 181, which acts as the Proton acceptor.

This sequence belongs to the PanB family. As to quaternary structure, homodecamer; pentamer of dimers. Mg(2+) is required as a cofactor.

The protein localises to the cytoplasm. It catalyses the reaction 3-methyl-2-oxobutanoate + (6R)-5,10-methylene-5,6,7,8-tetrahydrofolate + H2O = 2-dehydropantoate + (6S)-5,6,7,8-tetrahydrofolate. Its pathway is cofactor biosynthesis; (R)-pantothenate biosynthesis; (R)-pantoate from 3-methyl-2-oxobutanoate: step 1/2. Its function is as follows. Catalyzes the reversible reaction in which hydroxymethyl group from 5,10-methylenetetrahydrofolate is transferred onto alpha-ketoisovalerate to form ketopantoate. This Shewanella denitrificans (strain OS217 / ATCC BAA-1090 / DSM 15013) protein is 3-methyl-2-oxobutanoate hydroxymethyltransferase.